A 147-amino-acid chain; its full sequence is Hemoglobin subunit epsilon (147 aa).

A Globin domain is found at 3–147 (HFTAEEKNAI…VANALAHKYH (145 aa)). At Ser-51 the chain carries Phosphoserine. Heme b-binding residues include His-64 and His-93.

It belongs to the globin family. In terms of assembly, heterotetramer of two alpha chains and two epsilon chains in early embryonic hemoglobin Gower-2; two zeta chains and two epsilon chains in early embryonic hemoglobin Gower-1. In terms of tissue distribution, red blood cells.

The epsilon chain is a beta-type chain of early mammalian embryonic hemoglobin. This Sminthopsis crassicaudata (Fat-tailed dunnart) protein is Hemoglobin subunit epsilon (HBE1).